Reading from the N-terminus, the 246-residue chain is 23S rRNA (guanosine-2'-O-)-methyltransferase RlmB (246 aa).

Glycine 197, isoleucine 217, and leucine 226 together coordinate S-adenosyl-L-methionine.

This sequence belongs to the class IV-like SAM-binding methyltransferase superfamily. RNA methyltransferase TrmH family. RlmB subfamily.

The protein resides in the cytoplasm. It carries out the reaction guanosine(2251) in 23S rRNA + S-adenosyl-L-methionine = 2'-O-methylguanosine(2251) in 23S rRNA + S-adenosyl-L-homocysteine + H(+). Specifically methylates the ribose of guanosine 2251 in 23S rRNA. The polypeptide is 23S rRNA (guanosine-2'-O-)-methyltransferase RlmB (Haemophilus ducreyi (strain 35000HP / ATCC 700724)).